A 356-amino-acid polypeptide reads, in one-letter code: Peritrophin-44 (356 aa).

Positions 1–23 are cleaved as a signal peptide; that stretch reads MKELQITTGCLLLMVAAIGKTSA. 5 consecutive Chitin-binding type-2 domains span residues 28-85, 88-146, 147-201, 220-283, and 286-355; these read SETC…KCIS, KNAC…ECTA, DSIC…PCLA, NFVC…PCTF, and CGNL…YKLC. A disulfide bond links Cys62 and Cys75. An N-linked (GlcNAc...) asparagine glycan is attached at Asn114. 3 disulfides stabilise this stretch: Cys122-Cys135, Cys181-Cys193, and Cys262-Cys273. Asn309 carries an N-linked (GlcNAc...) asparagine glycan.

Glycosylated. Larval peritrophic membrane.

In terms of biological role, may have roles in the maintenance of peritrophic membrane structure and in the determination of the porosity of the peritrophic membrane. May bind chitin or related oligosaccharide structures. The chain is Peritrophin-44 from Lucilia cuprina (Green bottle fly).